A 159-amino-acid polypeptide reads, in one-letter code: Small ribosomal subunit protein uS7 (159 aa).

It belongs to the universal ribosomal protein uS7 family. As to quaternary structure, part of the 30S ribosomal subunit. Contacts proteins S9 and S11.

Functionally, one of the primary rRNA binding proteins, it binds directly to 16S rRNA where it nucleates assembly of the head domain of the 30S subunit. Is located at the subunit interface close to the decoding center, probably blocks exit of the E-site tRNA. The chain is Small ribosomal subunit protein uS7 from Rickettsia felis (strain ATCC VR-1525 / URRWXCal2) (Rickettsia azadi).